We begin with the raw amino-acid sequence, 173 residues long: UPF0102 protein Psyc_1908 (173 aa).

This sequence belongs to the UPF0102 family.

The sequence is that of UPF0102 protein Psyc_1908 from Psychrobacter arcticus (strain DSM 17307 / VKM B-2377 / 273-4).